A 211-amino-acid chain; its full sequence is Small ribosomal subunit protein uS5 (211 aa).

The tract at residues 1 to 41 (MPGRERRDGGRSADDNKQNDRNERRGGGRRDDRRNQQQDER) is disordered. An S5 DRBM domain is found at 44 to 107 (YIERVVTINR…EEARKNFFRV (64 aa)).

This sequence belongs to the universal ribosomal protein uS5 family. In terms of assembly, part of the 30S ribosomal subunit. Contacts proteins S4 and S8.

In terms of biological role, with S4 and S12 plays an important role in translational accuracy. Its function is as follows. Located at the back of the 30S subunit body where it stabilizes the conformation of the head with respect to the body. This chain is Small ribosomal subunit protein uS5, found in Corynebacterium glutamicum (strain R).